The sequence spans 1609 residues: Laminin subunit gamma-1 (1609 aa).

Residues Met-1–Ala-33 form the signal peptide. A Laminin N-terminal domain is found at Arg-46–Arg-285. 2 N-linked (GlcNAc...) asparagine glycosylation sites follow: Asn-60 and Asn-134. 16 cysteine pairs are disulfide-bonded: Cys-286/Cys-295, Cys-288/Cys-305, Cys-307/Cys-316, Cys-319/Cys-339, Cys-342/Cys-351, Cys-344/Cys-367, Cys-370/Cys-379, Cys-382/Cys-395, Cys-398/Cys-410, Cys-400/Cys-416, Cys-418/Cys-427, Cys-430/Cys-442, Cys-445/Cys-456, Cys-447/Cys-463, Cys-465/Cys-474, and Cys-477/Cys-492. 4 consecutive Laminin EGF-like domains span residues Cys-286–Pro-341, Cys-342–Ser-397, Cys-398–Pro-444, and Cys-445–Pro-494. The region spanning Cys-495–Cys-504 is the Laminin EGF-like 5; first part domain. The Laminin IV type A domain maps to Ser-514–Ser-689. N-linked (GlcNAc...) asparagine glycans are attached at residues Asn-576 and Asn-650. In terms of domain architecture, Laminin EGF-like 5; second part spans Cys-690 to Leu-723. 24 cysteine pairs are disulfide-bonded: Cys-724–Cys-733, Cys-726–Cys-740, Cys-742–Cys-751, Cys-754–Cys-770, Cys-773–Cys-781, Cys-775–Cys-792, Cys-795–Cys-804, Cys-807–Cys-825, Cys-828–Cys-842, Cys-830–Cys-849, Cys-852–Cys-861, Cys-864–Cys-881, Cys-884–Cys-898, Cys-886–Cys-905, Cys-907–Cys-916, Cys-919–Cys-932, Cys-935–Cys-947, Cys-937–Cys-954, Cys-956–Cys-965, Cys-968–Cys-980, Cys-983–Cys-995, Cys-985–Cys-1001, Cys-1003–Cys-1012, and Cys-1015–Cys-1028. 6 Laminin EGF-like domains span residues Cys-724 to Pro-772, Cys-773 to Leu-827, Cys-828 to Ala-883, Cys-884 to Arg-934, Cys-935 to Pro-982, and Cys-983 to Glu-1030. 2 N-linked (GlcNAc...) asparagine glycosylation sites follow: Asn-1022 and Asn-1107. Residues Glu-1030–Pro-1609 are domain II and I. Residues Val-1038 to Pro-1609 adopt a coiled-coil conformation. Ser-1149 bears the Phosphoserine; by FAM20C mark. N-linked (GlcNAc...) asparagine glycosylation is found at Asn-1161, Asn-1175, Asn-1205, Asn-1223, Asn-1241, Asn-1380, Asn-1395, and Asn-1439. Ser-1493 carries the phosphoserine modification.

Laminin is a complex glycoprotein, consisting of three different polypeptide chains (alpha, beta, gamma), which are bound to each other by disulfide bonds into a cross-shaped molecule comprising one long and three short arms with globules at each end. Gamma-1 is a subunit of laminin-1 (laminin-111 or EHS laminin), laminin-2 (laminin-211 or merosin), laminin-3 (laminin-121 or S-laminin), laminin-4 (laminin-221 or S-merosin), laminin-6 (laminin-311 or K-laminin), laminin-7 (laminin-321 or KS-laminin), laminin-8 (laminin-411), laminin-9 (laminin-421), laminin-10 (laminin-511) and laminin-11 (laminin-521). Interacts with SVEP1. Found in the basement membranes (major component).

The protein localises to the secreted. It localises to the extracellular space. The protein resides in the extracellular matrix. It is found in the basement membrane. Functionally, binding to cells via a high affinity receptor, laminin is thought to mediate the attachment, migration and organization of cells into tissues during embryonic development by interacting with other extracellular matrix components. The polypeptide is Laminin subunit gamma-1 (Homo sapiens (Human)).